The following is a 361-amino-acid chain: uncharacterized protein (361 aa).

This is an uncharacterized protein from Acanthamoeba polyphaga (Amoeba).